Consider the following 454-residue polypeptide: Aquaporin-7 (454 aa).

The Cytoplasmic portion of the chain corresponds to 1 to 71 (MNINEPRDGG…LHLHNKTRNH (71 aa)). Residues 72 to 92 (FVATVAEFAGTTLFLFFAFSG) traverse the membrane as a helical segment. Residues 93–115 (TQVALLATPANDSNVVGTPSNPA) are Extracellular-facing. Asparagine 103 carries an N-linked (GlcNAc...) asparagine glycan. The helical transmembrane segment at 116–136 (QLLYVSLCFGFSLAVNAWVFF) threads the bilayer. Topologically, residues 137–163 (RISGGLFNPAVTMGMCIVGALPYFRGL) are cytoplasmic. The short motif at 144-146 (NPA) is the NPA 1 element. Residues 164-184 (LLIFAQIIGGIAAAAIVSALF) form a helical membrane-spanning segment. Residues 185–202 (PGPITFRTSLGGGTSIVQ) are Extracellular-facing. A helical transmembrane segment spans residues 203 to 223 (GLFIEMFLTAELVFTIFMLAA). Over 224 to 229 (EKHKGT) the chain is Cytoplasmic. Residues 230–250 (FIAPIGIGLSLFIAELTGVYF) traverse the membrane as a helical segment. The Extracellular segment spans residues 251–274 (TGGSVNPARSFGPSVVSGQFTGYH). Positions 256–258 (NPA) match the NPA 2 motif. A helical membrane pass occupies residues 275 to 295 (WIYWVGPILGAILASAFYKFI). The Cytoplasmic portion of the chain corresponds to 296–454 (KMLEYETANP…ENLRDNTHNN (159 aa)). The interval 343-454 (GASHVHENGN…ENLRDNTHNN (112 aa)) is disordered.

It belongs to the MIP/aquaporin (TC 1.A.8) family.

It localises to the membrane. The enzyme catalyses H2O(in) = H2O(out). In terms of biological role, water channel required to facilitate the transport of water across membranes. Involved in conidiation. This Botryotinia fuckeliana (strain B05.10) (Noble rot fungus) protein is Aquaporin-7.